Here is a 295-residue protein sequence, read N- to C-terminus: Small ribosomal subunit protein uS2 (295 aa).

A disordered region spans residues 247–295; sequence TDKGLTSKNVSKLKQTKKFSKTKNIDEETNTEFEQALNDADENKNSDNA.

It belongs to the universal ribosomal protein uS2 family.

In Rickettsia conorii (strain ATCC VR-613 / Malish 7), this protein is Small ribosomal subunit protein uS2.